The following is a 513-amino-acid chain: Cytochrome P450 4p1 (513 aa).

E320 and C459 together coordinate heme.

It belongs to the cytochrome P450 family. Heme is required as a cofactor.

Its subcellular location is the endoplasmic reticulum membrane. The protein localises to the microsome membrane. May be involved in the metabolism of insect hormones and in the breakdown of synthetic insecticides. This chain is Cytochrome P450 4p1 (Cyp4p1), found in Drosophila melanogaster (Fruit fly).